We begin with the raw amino-acid sequence, 955 residues long: Protein translocase subunit SecA (955 aa).

Residues Q87, 105-109 (GEGKT), and D494 contribute to the ATP site. The segment at 861–955 (AAPAPAAPRP…KKAPRTKRKR (95 aa)) is disordered. Over residues 874-888 (QEAAQQAQGTAAPSA) the composition is skewed to low complexity. A compositionally biased stretch (basic residues) spans 943–955 (SKGKKAPRTKRKR).

It belongs to the SecA family. As to quaternary structure, monomer and homodimer. Part of the essential Sec protein translocation apparatus which comprises SecA, SecYEG and auxiliary proteins SecDF. Other proteins may also be involved.

It is found in the cell membrane. It localises to the cytoplasm. It carries out the reaction ATP + H2O + cellular proteinSide 1 = ADP + phosphate + cellular proteinSide 2.. Functionally, part of the Sec protein translocase complex. Interacts with the SecYEG preprotein conducting channel. Has a central role in coupling the hydrolysis of ATP to the transfer of proteins into and across the cell membrane, serving as an ATP-driven molecular motor driving the stepwise translocation of polypeptide chains across the membrane. This chain is Protein translocase subunit SecA, found in Rhodococcus opacus (strain B4).